The following is a 221-amino-acid chain: Ribosomal RNA small subunit methyltransferase G 3 (221 aa).

S-adenosyl-L-methionine-binding positions include Gly85, Phe90, 136–137 (IE), and Arg150.

The protein belongs to the methyltransferase superfamily. RNA methyltransferase RsmG family.

It is found in the cytoplasm. It carries out the reaction guanosine(527) in 16S rRNA + S-adenosyl-L-methionine = N(7)-methylguanosine(527) in 16S rRNA + S-adenosyl-L-homocysteine. Specifically methylates the N7 position of guanine in position 527 of 16S rRNA. In Bdellovibrio bacteriovorus (strain ATCC 15356 / DSM 50701 / NCIMB 9529 / HD100), this protein is Ribosomal RNA small subunit methyltransferase G 3.